Reading from the N-terminus, the 295-residue chain is Bifunctional protein FolD (295 aa).

NADP(+)-binding positions include 167–169 (GRS), Ser-192, and Ile-233.

Belongs to the tetrahydrofolate dehydrogenase/cyclohydrolase family. As to quaternary structure, homodimer.

The enzyme catalyses (6R)-5,10-methylene-5,6,7,8-tetrahydrofolate + NADP(+) = (6R)-5,10-methenyltetrahydrofolate + NADPH. It carries out the reaction (6R)-5,10-methenyltetrahydrofolate + H2O = (6R)-10-formyltetrahydrofolate + H(+). The protein operates within one-carbon metabolism; tetrahydrofolate interconversion. Its function is as follows. Catalyzes the oxidation of 5,10-methylenetetrahydrofolate to 5,10-methenyltetrahydrofolate and then the hydrolysis of 5,10-methenyltetrahydrofolate to 10-formyltetrahydrofolate. This chain is Bifunctional protein FolD, found in Paramagnetospirillum magneticum (strain ATCC 700264 / AMB-1) (Magnetospirillum magneticum).